The primary structure comprises 274 residues: 2,3,4,5-tetrahydropyridine-2,6-dicarboxylate N-succinyltransferase (274 aa).

This sequence belongs to the transferase hexapeptide repeat family.

It localises to the cytoplasm. The enzyme catalyses (S)-2,3,4,5-tetrahydrodipicolinate + succinyl-CoA + H2O = (S)-2-succinylamino-6-oxoheptanedioate + CoA. It functions in the pathway amino-acid biosynthesis; L-lysine biosynthesis via DAP pathway; LL-2,6-diaminopimelate from (S)-tetrahydrodipicolinate (succinylase route): step 1/3. The sequence is that of 2,3,4,5-tetrahydropyridine-2,6-dicarboxylate N-succinyltransferase from Salmonella heidelberg (strain SL476).